A 144-amino-acid polypeptide reads, in one-letter code: Peroxisomal membrane protein PEX34 (144 aa).

A run of 3 helical transmembrane segments spans residues 18-30, 52-73, and 109-131; these read NIWSGVSSLLDFF, VWLCYSCISVIKCVWKLIKLCK, and TAALLQDLSYLMVLIYPGTRLFK.

As to quaternary structure, homooligomer. Interacts with PEX11, PEX25 and PEX27.

The protein resides in the peroxisome membrane. In concert with the three peroxisome divisional factors, PEX11, PEX25 and PEX27, controls peroxisome morphology and abundance under conditions of peroxisome proliferation. Maintains mature peroxisomes in actively dividing cells. The protein is Peroxisomal membrane protein PEX34 (PEX34) of Saccharomyces cerevisiae (strain ATCC 204508 / S288c) (Baker's yeast).